The following is a 359-amino-acid chain: Histamine H2 receptor (359 aa).

Residues methionine 1–serine 22 lie on the Extracellular side of the membrane. Asparagine 4 is a glycosylation site (N-linked (GlcNAc...) asparagine). A helical membrane pass occupies residues valine 23 to glycine 44. Over leucine 45–isoleucine 57 the chain is Cytoplasmic. A helical membrane pass occupies residues valine 58 to serine 81. Residues cysteine 82–asparagine 92 lie on the Extracellular side of the membrane. Residues cysteine 91 and cysteine 174 are joined by a disulfide bond. The helical transmembrane segment at isoleucine 93–leucine 114 threads the bilayer. Topologically, residues aspartate 115–arginine 134 are cytoplasmic. Residues valine 135–asparagine 159 traverse the membrane as a helical segment. Residues serine 160–leucine 180 are Extracellular-facing. A helical transmembrane segment spans residues valine 181 to arginine 204. At isoleucine 205–valine 234 the chain is on the cytoplasmic side. A helical membrane pass occupies residues threonine 235–glycine 258. Residues leucine 259–glutamate 267 lie on the Extracellular side of the membrane. A helical transmembrane segment spans residues alanine 268–alanine 289. Topologically, residues threonine 290–arginine 359 are cytoplasmic. The S-palmitoyl cysteine moiety is linked to residue cysteine 305. Residues histidine 310–asparagine 327 are compositionally biased toward polar residues. The disordered stretch occupies residues histidine 310 to arginine 359. A compositionally biased stretch (basic and acidic residues) spans glutamine 328–leucine 340.

This sequence belongs to the G-protein coupled receptor 1 family. Gastric fundus and, to a lesser extent, in brain.

It localises to the cell membrane. The H2 subclass of histamine receptors mediates gastric acid secretion. The activity of this receptor is mediated by G proteins which activate adenylyl cyclase. The sequence is that of Histamine H2 receptor (HRH2) from Canis lupus familiaris (Dog).